We begin with the raw amino-acid sequence, 73 residues long: Translation initiation factor IF-1 (73 aa).

The 72-residue stretch at 1 to 72 (MSKKDVIELE…SRGRIVYRKK (72 aa)) folds into the S1-like domain.

It belongs to the IF-1 family. In terms of assembly, component of the 30S ribosomal translation pre-initiation complex which assembles on the 30S ribosome in the order IF-2 and IF-3, IF-1 and N-formylmethionyl-tRNA(fMet); mRNA recruitment can occur at any time during PIC assembly.

It is found in the cytoplasm. In terms of biological role, one of the essential components for the initiation of protein synthesis. Stabilizes the binding of IF-2 and IF-3 on the 30S subunit to which N-formylmethionyl-tRNA(fMet) subsequently binds. Helps modulate mRNA selection, yielding the 30S pre-initiation complex (PIC). Upon addition of the 50S ribosomal subunit IF-1, IF-2 and IF-3 are released leaving the mature 70S translation initiation complex. The polypeptide is Translation initiation factor IF-1 (Fusobacterium nucleatum subsp. nucleatum (strain ATCC 25586 / DSM 15643 / BCRC 10681 / CIP 101130 / JCM 8532 / KCTC 2640 / LMG 13131 / VPI 4355)).